A 104-amino-acid polypeptide reads, in one-letter code: N(4)-acetylcytidine amidohydrolase (104 aa).

Residues 6–102 (ITFYQRFEAD…SEFWVIEIRL (97 aa)) enclose the ASCH domain. The active-site Proton acceptor is the Lys21. The active-site Nucleophile is the Thr24. Residue Glu74 is the Proton donor of the active site.

The protein belongs to the N(4)-acetylcytidine amidohydrolase family.

It carries out the reaction N(4)-acetylcytidine + H2O = cytidine + acetate + H(+). The catalysed reaction is N(4)-acetyl-2'-deoxycytidine + H2O = 2'-deoxycytidine + acetate + H(+). It catalyses the reaction N(4)-acetylcytosine + H2O = cytosine + acetate + H(+). Functionally, catalyzes the hydrolysis of N(4)-acetylcytidine (ac4C). The polypeptide is N(4)-acetylcytidine amidohydrolase (Haemophilus influenzae (strain PittEE)).